The following is a 532-amino-acid chain: Alkaline phosphatase (532 aa).

Residues 1–20 (MASERDPLLPVHGEGPESPS) are disordered. Residues 27 to 47 (WIKHGILLILVLSTVIFFYFF) traverse the membrane as a helical; Signal-anchor for type II membrane protein segment. Asp-68 is a binding site for Mg(2+). Position 68 (Asp-68) interacts with Zn(2+). The Phosphoserine intermediate role is filled by Ser-115. Mg(2+) is bound by residues Asp-166, Thr-168, and Glu-306. Zn(2+) is bound by residues Asp-311, His-315, Asp-352, His-353, and His-456.

This sequence belongs to the alkaline phosphatase family. It depends on Mg(2+) as a cofactor. Requires Zn(2+) as cofactor.

Its subcellular location is the membrane. The catalysed reaction is a phosphate monoester + H2O = an alcohol + phosphate. The protein is Alkaline phosphatase of Schizosaccharomyces pombe (strain 972 / ATCC 24843) (Fission yeast).